Consider the following 558-residue polypeptide: Aspartate--tRNA ligase 2, cytoplasmic (558 aa).

Residues 1–18 show a composition bias toward low complexity; the sequence is MSSESEIPPLSSSTAAAE. The segment at 1-57 is disordered; the sequence is MSSESEIPPLSSSTAAAEESGEKTSKKAAKKEAAKLEKLRRRQEQEEATRRTASISL. Ser2 bears the N-acetylserine mark. Residues 20 to 50 show a composition bias toward basic and acidic residues; sequence SGEKTSKKAAKKEAAKLEKLRRRQEQEEATR. The OB DNA-binding region spans 110–195; it reads VLIRGRVHTN…QVEIQVRKVY (86 aa). Glu286 is an L-aspartate binding site. The segment at 308–311 is aspartate; that stretch reads QLHK. Position 330 (Arg330) interacts with L-aspartate. ATP contacts are provided by residues 330-332, 338-340, and Glu481; these read RAE and RHL. Positions 481 and 484 each coordinate Mg(2+). Ser484 and Arg488 together coordinate L-aspartate. 529 to 532 is a binding site for ATP; it reads GLER.

This sequence belongs to the class-II aminoacyl-tRNA synthetase family. Type 2 subfamily.

Its subcellular location is the cytoplasm. It is found in the cytosol. The protein resides in the endoplasmic reticulum. The catalysed reaction is tRNA(Asp) + L-aspartate + ATP = L-aspartyl-tRNA(Asp) + AMP + diphosphate. Functionally, catalyzes the specific attachment of an amino acid to its cognate tRNA in a 2 step reaction: the amino acid (AA) is first activated by ATP to form AA-AMP and then transferred to the acceptor end of the tRNA. Involved in the perception of beta-aminobutyric acid (BABA) and required for BABA priming effect in disease resistance. The polypeptide is Aspartate--tRNA ligase 2, cytoplasmic (Arabidopsis thaliana (Mouse-ear cress)).